A 722-amino-acid chain; its full sequence is Homeobox-leucine zipper protein HDG11 (722 aa).

Positions 1 to 19 (MSFVVGVGGSGSGSGGDGG) are enriched in gly residues. The segment at 1 to 42 (MSFVVGVGGSGSGSGGDGGGSHHHDGSETDRKKKRYHRHTAQ) is disordered. The span at 20 to 31 (GSHHHDGSETDR) shows a compositional bias: basic and acidic residues. The segment at residues 32-91 (KKKRYHRHTAQQIQRLESSFKECPHPDEKQRNQLSRELGLAPRQIKFWFQNRRTQLKAQH) is a DNA-binding region (homeobox). Residues 81 to 161 (QNRRTQLKAQ…LERMSTIASK (81 aa)) are a coiled coil. In terms of domain architecture, START spans 227–460 (SDMDKPIMTG…LQRMCERFAS (234 aa)).

This sequence belongs to the HD-ZIP homeobox family. Class IV subfamily. In terms of assembly, interacts with BBM. In terms of tissue distribution, expressed in apical meristems and young epidermal tissue including trichomes and stipules. Expressed in lateral root tips, the L1 layer of apical inflorescence meristems and early flower primordia, carpel and petal epidermis, stigma papillae, ovule primordia, nucellus and embryo.

The protein resides in the nucleus. Its function is as follows. Transcription factor which acts as a positive regulator of drought stress tolerance. Can transactivate CIPK3, NCED3 and ERECTA. Transactivates several cell-wall-loosening protein genes by directly binding to HD motifs in their promoters. These target genes play important roles in coordinating cell-wall extensibility with root development and growth. Transactivates CYP74A/AOS, AOC3, OPR3 and 4CLL5/OPCL1 genes by directly binding to HD motifs in their promoters. These target genes are involved in jasmonate (JA) biosynthesis, and JA signaling affects root architecture by activating auxin signaling, which promotes lateral root formation. Acts as a negative regulator of trichome branching. Required for the establishment of giant cell identity on the abaxial side of sepals. Seems to promote cell differentiation. May regulate cell differentiation and proliferation during root and shoot meristem development. In Arabidopsis thaliana (Mouse-ear cress), this protein is Homeobox-leucine zipper protein HDG11.